Consider the following 184-residue polypeptide: dCTP deaminase (184 aa).

Residues 107 to 112, 131 to 133, glutamine 152, tyrosine 166, and glutamine 176 contribute to the dCTP site; these read KSTYAR and TLE. Glutamate 133 serves as the catalytic Proton donor/acceptor.

This sequence belongs to the dCTP deaminase family. Homotrimer.

It catalyses the reaction dCTP + H2O + H(+) = dUTP + NH4(+). The protein operates within pyrimidine metabolism; dUMP biosynthesis; dUMP from dCTP (dUTP route): step 1/2. Functionally, catalyzes the deamination of dCTP to dUTP. This is dCTP deaminase from Novosphingobium aromaticivorans (strain ATCC 700278 / DSM 12444 / CCUG 56034 / CIP 105152 / NBRC 16084 / F199).